The primary structure comprises 445 residues: Phosphoglucosamine mutase (445 aa).

Ser102 functions as the Phosphoserine intermediate in the catalytic mechanism. Mg(2+)-binding residues include Ser102, Asp241, Asp243, and Asp245. At Ser102 the chain carries Phosphoserine.

It belongs to the phosphohexose mutase family. The cofactor is Mg(2+). In terms of processing, activated by phosphorylation.

The catalysed reaction is alpha-D-glucosamine 1-phosphate = D-glucosamine 6-phosphate. Functionally, catalyzes the conversion of glucosamine-6-phosphate to glucosamine-1-phosphate. This Shigella dysenteriae serotype 1 (strain Sd197) protein is Phosphoglucosamine mutase.